The following is a 530-amino-acid chain: MGSNSGQAGRHIYKSLADDGPFDSVEPPKRPTSRLIMHSMAMFGREFCYAVEAAYVTPVLLSVGLPSSLYSIVWFLSPILGFLLQPVVGSASDHCRSRWGRRRPYILTLGVMMLVGMALYLNGATVVAALIANPRRKLVWAISVTMIGVVLFDFAADFIDGPIKAYLFDVCSHQDKEKGLHYHALFTGFGGALGYLLGAIDWAHLELGRLLGTEFQVMFFFSALVLTLCFTVHLCSISEAPLTEVAKGIPPQQTPQDPPLSSDGMYEYGSIEKVKNGYVNPELAMQGAKNKNHAEQTRRAMTLKSLLRALVNMPPHYRYLCISHLIGWTAFLSNMLFFTDFMGQIVYRGDPYSAHNSTEFLIYERGVEVGCWGLCINSVFSSLYSYFQKVLVSYIGLKGLYFTGYLLFGLGTGFIGLFPNVYSTLVLCSLFGVMSSTLYTVPFNLITEYHREEEKERQQAPGGDPDNSVRGKGMDCATLTCMVQLAQILVGGGLGFLVNTAGTVVVVVITASAVALIGCCFVALFVRYVD.

The Cytoplasmic portion of the chain corresponds to 1 to 46 (MGSNSGQAGRHIYKSLADDGPFDSVEPPKRPTSRLIMHSMAMFGRE). A helical membrane pass occupies residues 47–67 (FCYAVEAAYVTPVLLSVGLPS). Position 68 (Ser-68) is a topological domain, extracellular. Residues 69-89 (LYSIVWFLSPILGFLLQPVVG) form a helical membrane-spanning segment. The Cytoplasmic segment spans residues 90 to 110 (SASDHCRSRWGRRRPYILTLG). Residues 111–131 (VMMLVGMALYLNGATVVAALI) traverse the membrane as a helical segment. The Extracellular segment spans residues 132-138 (ANPRRKL). A helical transmembrane segment spans residues 139–159 (VWAISVTMIGVVLFDFAADFI). Residues 160–184 (DGPIKAYLFDVCSHQDKEKGLHYHA) lie on the Cytoplasmic side of the membrane. The chain crosses the membrane as a helical span at residues 185–205 (LFTGFGGALGYLLGAIDWAHL). Over 206–216 (ELGRLLGTEFQ) the chain is Extracellular. A helical membrane pass occupies residues 217-237 (VMFFFSALVLTLCFTVHLCSI). The Cytoplasmic portion of the chain corresponds to 238-318 (SEAPLTEVAK…ALVNMPPHYR (81 aa)). Residues 319–339 (YLCISHLIGWTAFLSNMLFFT) form a helical membrane-spanning segment. The Extracellular segment spans residues 340-366 (DFMGQIVYRGDPYSAHNSTEFLIYERG). The N-linked (GlcNAc...) asparagine glycan is linked to Asn-356. The helical transmembrane segment at 367–387 (VEVGCWGLCINSVFSSLYSYF) threads the bilayer. The Cytoplasmic portion of the chain corresponds to 388–398 (QKVLVSYIGLK). The helical transmembrane segment at 399 to 419 (GLYFTGYLLFGLGTGFIGLFP) threads the bilayer. Residues 420–425 (NVYSTL) lie on the Extracellular side of the membrane. A helical membrane pass occupies residues 426 to 446 (VLCSLFGVMSSTLYTVPFNLI). Topologically, residues 447 to 477 (TEYHREEEKERQQAPGGDPDNSVRGKGMDCA) are cytoplasmic. A helical transmembrane segment spans residues 478–498 (TLTCMVQLAQILVGGGLGFLV). Over 499 to 504 (NTAGTV) the chain is Extracellular. A helical transmembrane segment spans residues 505-525 (VVVVITASAVALIGCCFVALF). Residues 526–530 (VRYVD) lie on the Cytoplasmic side of the membrane.

This sequence belongs to the glycoside-pentoside-hexuronide (GPH) cation symporter transporter (TC 2.A.2) family. Interacts with TYRP1. Expressed in mature melanocytes.

The protein localises to the melanosome membrane. The enzyme catalyses sucrose(out) + H(+)(out) = sucrose(in) + H(+)(in). It carries out the reaction D-glucose(out) + H(+)(out) = D-glucose(in) + H(+)(in). Proton-associated glucose and sucrose transporter. May be able to transport also fructose. Expressed at a late melanosome maturation stage where functions as proton/glucose exporter which increase lumenal pH by decreasing glycolysis. Regulates melanogenesis by maintaining melanosome neutralization that is initially initiated by transient OCA2 and required for a proper function of the tyrosinase TYR. In Homo sapiens (Human), this protein is Membrane-associated transporter protein.